A 642-amino-acid chain; its full sequence is Threonine--tRNA ligase (642 aa).

One can recognise a TGS domain in the interval Met-1–Thr-61. Residues Asp-243–Pro-534 are catalytic. Residues Cys-334, His-385, and His-511 each coordinate Zn(2+).

It belongs to the class-II aminoacyl-tRNA synthetase family. As to quaternary structure, homodimer. It depends on Zn(2+) as a cofactor.

It is found in the cytoplasm. The catalysed reaction is tRNA(Thr) + L-threonine + ATP = L-threonyl-tRNA(Thr) + AMP + diphosphate + H(+). Its function is as follows. Catalyzes the attachment of threonine to tRNA(Thr) in a two-step reaction: L-threonine is first activated by ATP to form Thr-AMP and then transferred to the acceptor end of tRNA(Thr). Also edits incorrectly charged L-seryl-tRNA(Thr). This chain is Threonine--tRNA ligase, found in Yersinia pseudotuberculosis serotype O:1b (strain IP 31758).